A 257-amino-acid polypeptide reads, in one-letter code: Isoprenyl transferase (257 aa).

Asp34 is a catalytic residue. A Mg(2+)-binding site is contributed by Asp34. Residues 35-38 (GNGR), Trp39, Arg47, His51, and 79-81 (STE) contribute to the substrate site. Asn82 (proton acceptor) is an active-site residue. Substrate is bound by residues Trp83, Arg85, Arg202, and 208–210 (RLS). Glu221 is a Mg(2+) binding site.

Belongs to the UPP synthase family. In terms of assembly, homodimer. Mg(2+) serves as cofactor.

In terms of biological role, catalyzes the condensation of isopentenyl diphosphate (IPP) with allylic pyrophosphates generating different type of terpenoids. This is Isoprenyl transferase from Geobacillus kaustophilus (strain HTA426).